A 396-amino-acid polypeptide reads, in one-letter code: Ribosomal RNA large subunit methyltransferase I (396 aa).

A PUA domain is found at 2 to 81 (SVRLVLAKGR…ESIDIAFFSR (80 aa)).

This sequence belongs to the methyltransferase superfamily. RlmI family.

The protein resides in the cytoplasm. The catalysed reaction is cytidine(1962) in 23S rRNA + S-adenosyl-L-methionine = 5-methylcytidine(1962) in 23S rRNA + S-adenosyl-L-homocysteine + H(+). Functionally, specifically methylates the cytosine at position 1962 (m5C1962) of 23S rRNA. This is Ribosomal RNA large subunit methyltransferase I from Shigella flexneri serotype 5b (strain 8401).